The sequence spans 213 residues: ATP phosphoribosyltransferase (213 aa).

Belongs to the ATP phosphoribosyltransferase family. Short subfamily. In terms of assembly, heteromultimer composed of HisG and HisZ subunits.

Its subcellular location is the cytoplasm. It catalyses the reaction 1-(5-phospho-beta-D-ribosyl)-ATP + diphosphate = 5-phospho-alpha-D-ribose 1-diphosphate + ATP. It functions in the pathway amino-acid biosynthesis; L-histidine biosynthesis; L-histidine from 5-phospho-alpha-D-ribose 1-diphosphate: step 1/9. Functionally, catalyzes the condensation of ATP and 5-phosphoribose 1-diphosphate to form N'-(5'-phosphoribosyl)-ATP (PR-ATP). Has a crucial role in the pathway because the rate of histidine biosynthesis seems to be controlled primarily by regulation of HisG enzymatic activity. This chain is ATP phosphoribosyltransferase, found in Listeria monocytogenes serotype 4a (strain HCC23).